Consider the following 689-residue polypeptide: Elongation factor G (689 aa).

The region spanning 8–282 (ENTRNLGIMA…AVVDYLPSPL (275 aa)) is the tr-type G domain. Residues 17–24 (AHIDAGKT), 81–85 (DTPGH), and 135–138 (NKMD) each bind GTP.

Belongs to the TRAFAC class translation factor GTPase superfamily. Classic translation factor GTPase family. EF-G/EF-2 subfamily.

The protein resides in the cytoplasm. Its function is as follows. Catalyzes the GTP-dependent ribosomal translocation step during translation elongation. During this step, the ribosome changes from the pre-translocational (PRE) to the post-translocational (POST) state as the newly formed A-site-bound peptidyl-tRNA and P-site-bound deacylated tRNA move to the P and E sites, respectively. Catalyzes the coordinated movement of the two tRNA molecules, the mRNA and conformational changes in the ribosome. This is Elongation factor G from Mesoplasma florum (strain ATCC 33453 / NBRC 100688 / NCTC 11704 / L1) (Acholeplasma florum).